A 313-amino-acid chain; its full sequence is MTFIKRLEDAYETLLGNYPAGVSSTSTSKYNEIRKIVSEAFLIGENEVYVTGTSRRISNLDTRFAQGNQRNKHTRMAVAFISIPSVDDSELDELIIRTRNSAITTSSKFCNGEERGTIFDGILLFLVFEGETKVYPLAFLVFENDFELKEKAEELIPGIELKEYPRANQSPAQENNKSAKNEDEESAKSYVVFLDIEEDGSIVEFVEDKDKTYRIGDMIWTASHTNGSSAITRRLEVIEVVENLVVCKIKHKYNEPVDKNSLLKFVNIEQDLISFLDLHPNVQNGSEGFVSGDIVDENATTSSDDLPEDFENN.

The segment at Phe289–Asn313 is disordered.

In terms of assembly, bsuMI restriction activity requires YdiR, YdiS and YdjA.

It carries out the reaction Endonucleolytic cleavage of DNA to give specific double-stranded fragments with terminal 5'-phosphates.. A P subtype restriction enzyme that recognizes the double-stranded sequence 5'-CTCGAG-3'; the cleavage site is unknown. This Bacillus subtilis (strain 168) protein is Type II restriction enzyme BsuMI component YdiR (ydiR).